The primary structure comprises 395 residues: S-adenosylmethionine synthase (395 aa).

His-15 is a binding site for ATP. Position 17 (Asp-17) interacts with Mg(2+). Glu-43 is a K(+) binding site. L-methionine contacts are provided by Glu-56 and Gln-99. Positions 99–109 (QSPDIAMGVDE) are flexible loop. ATP contacts are provided by residues 173-175 (DGK), 239-240 (RF), Asp-248, 254-255 (RK), Ala-271, and Lys-275. Asp-248 contacts L-methionine. Lys-279 lines the L-methionine pocket.

It belongs to the AdoMet synthase family. As to quaternary structure, homotetramer; dimer of dimers. Mg(2+) serves as cofactor. K(+) is required as a cofactor.

Its subcellular location is the cytoplasm. It carries out the reaction L-methionine + ATP + H2O = S-adenosyl-L-methionine + phosphate + diphosphate. It functions in the pathway amino-acid biosynthesis; S-adenosyl-L-methionine biosynthesis; S-adenosyl-L-methionine from L-methionine: step 1/1. Catalyzes the formation of S-adenosylmethionine (AdoMet) from methionine and ATP. The overall synthetic reaction is composed of two sequential steps, AdoMet formation and the subsequent tripolyphosphate hydrolysis which occurs prior to release of AdoMet from the enzyme. This is S-adenosylmethionine synthase from Desulforudis audaxviator (strain MP104C).